Consider the following 242-residue polypeptide: Probable inactive serine protease 58 (242 aa).

Positions 1-17 (MNLILLWALLNLPVALT) are cleaved as a signal peptide. The 223-residue stretch at 18-240 (FDPNYKDDIT…YIPWIENTIQ (223 aa)) folds into the Peptidase S1 domain. 4 disulfides stabilise this stretch: Cys41–Cys57, Cys134–Cys202, Cys166–Cys181, and Cys192–Cys216. Asn157 carries an N-linked (GlcNAc...) asparagine glycan.

It belongs to the peptidase S1 family.

Its subcellular location is the secreted. The polypeptide is Probable inactive serine protease 58 (PRSS58) (Bos taurus (Bovine)).